A 146-amino-acid polypeptide reads, in one-letter code: Large ribosomal subunit protein bL19 (146 aa).

It belongs to the bacterial ribosomal protein bL19 family.

In terms of biological role, this protein is located at the 30S-50S ribosomal subunit interface and may play a role in the structure and function of the aminoacyl-tRNA binding site. This chain is Large ribosomal subunit protein bL19, found in Bartonella bacilliformis (strain ATCC 35685 / KC583 / Herrer 020/F12,63).